The chain runs to 290 residues: ATP synthase gamma chain (290 aa).

Belongs to the ATPase gamma chain family. F-type ATPases have 2 components, CF(1) - the catalytic core - and CF(0) - the membrane proton channel. CF(1) has five subunits: alpha(3), beta(3), gamma(1), delta(1), epsilon(1). CF(0) has three main subunits: a, b and c.

It is found in the cell membrane. Produces ATP from ADP in the presence of a proton gradient across the membrane. The gamma chain is believed to be important in regulating ATPase activity and the flow of protons through the CF(0) complex. This chain is ATP synthase gamma chain, found in Heliobacterium modesticaldum (strain ATCC 51547 / Ice1).